The sequence spans 566 residues: E3 ubiquitin-protein ligase RNF220 (566 aa).

Lys277 participates in a covalent cross-link: Glycyl lysine isopeptide (Lys-Gly) (interchain with G-Cter in SUMO2). Residues Lys277–His297 form a disordered region. At Ser390 the chain carries Phosphoserine. The stretch at Glu485–Lys513 forms a coiled coil. Residues Cys514–Ser522 form a required for targeting to the cytoplasm region. The RING-type zinc-finger motif lies at Cys514–Tyr553.

Interacts with SIN3B. Interacts with CTNNB1 (via Armadillo repeats 2-8). Interacts with USP7 (via MATH domain). In terms of processing, auto-ubiquitinated; leads to proteasomal degradation.

It localises to the cytoplasm. The enzyme catalyses S-ubiquitinyl-[E2 ubiquitin-conjugating enzyme]-L-cysteine + [acceptor protein]-L-lysine = [E2 ubiquitin-conjugating enzyme]-L-cysteine + N(6)-ubiquitinyl-[acceptor protein]-L-lysine.. The protein operates within protein modification; protein ubiquitination. Its function is as follows. E3 ubiquitin-protein ligase that promotes the ubiquitination and proteasomal degradation of SIN3B. Independently of its E3 ligase activity, acts as a CTNNB1 stabilizer through USP7-mediated deubiquitination of CTNNB1 promoting Wnt signaling. This chain is E3 ubiquitin-protein ligase RNF220 (RNF220), found in Bos taurus (Bovine).